The chain runs to 292 residues: Nucleotide-binding protein AZOSEA20610 (292 aa).

8-15 is an ATP binding site; it reads GLSGSGKS. Residue 57–60 coordinates GTP; that stretch reads DVRS.

Belongs to the RapZ-like family.

Displays ATPase and GTPase activities. This chain is Nucleotide-binding protein AZOSEA20610, found in Aromatoleum aromaticum (strain DSM 19018 / LMG 30748 / EbN1) (Azoarcus sp. (strain EbN1)).